The sequence spans 715 residues: Tegument protein UL46 (715 aa).

Disordered regions lie at residues 432–513 (WSAG…CAAQ), 585–605 (DDAR…APYE), and 659–680 (GSAL…PSPV). Over residues 444-455 (GPGGHRAGGGTV) the composition is skewed to gly residues. Low complexity-rich tracts occupy residues 456-467 (GKRFSGPARQRA) and 475-488 (PTLD…VPEA). The segment covering 664 to 677 (SPPPRPPPPPPLSP) has biased composition (pro residues).

The protein belongs to the herpesviridae HHV-1 VP11/12 protein family. In terms of assembly, interacts with VP16. Interacts with host LCK, PIK3R1, SHC1 AND GRB2; these interactions promote the activation of the PI3K/AKT pathway. Interacts with host YWHAB. Interacts with ICP0; this interaction targets UL46 for degradation by the proteasome. Phosphorylated by host LCK. The phosphorylation seems to be lymphocyte-specific.

It localises to the virion tegument. The protein localises to the host cell membrane. Functionally, plays a role in the activation of the host PI3K/AKT pathway to promote cell survival. Interacts with and activates host LCK and thereby recruits downstream partners SHC1, GRB2 and PI3KR1 in order to activate the PI3K pathway by phosphorylating host AKT on its activating residues. This mechanism is inhibited by the viral protein US3 that instead promotes incorporation of UL46 into virions. In Human herpesvirus 1 (strain F) (HHV-1), this protein is Tegument protein UL46.